Consider the following 99-residue polypeptide: MSQISRDEVAHLARLARLALTEDELDGFAGQLDAILGHVSQIQSVDVTGVEPTDNPLKDVNVTRPDTVQPCLTQDEALAAAPKAADGRFAVPRILGEPE.

It belongs to the GatC family. In terms of assembly, heterotrimer of A, B and C subunits.

It carries out the reaction L-glutamyl-tRNA(Gln) + L-glutamine + ATP + H2O = L-glutaminyl-tRNA(Gln) + L-glutamate + ADP + phosphate + H(+). It catalyses the reaction L-aspartyl-tRNA(Asn) + L-glutamine + ATP + H2O = L-asparaginyl-tRNA(Asn) + L-glutamate + ADP + phosphate + 2 H(+). Functionally, allows the formation of correctly charged Asn-tRNA(Asn) or Gln-tRNA(Gln) through the transamidation of misacylated Asp-tRNA(Asn) or Glu-tRNA(Gln) in organisms which lack either or both of asparaginyl-tRNA or glutaminyl-tRNA synthetases. The reaction takes place in the presence of glutamine and ATP through an activated phospho-Asp-tRNA(Asn) or phospho-Glu-tRNA(Gln). This is Aspartyl/glutamyl-tRNA(Asn/Gln) amidotransferase subunit C from Mycolicibacterium smegmatis (strain ATCC 700084 / mc(2)155) (Mycobacterium smegmatis).